A 79-amino-acid polypeptide reads, in one-letter code: UPF0291 protein BH2353 (79 aa).

The interval 57 to 79 (GAGNDVTPDKLKQSKNKYRNDIH) is disordered. Residues 63-79 (TPDKLKQSKNKYRNDIH) show a composition bias toward basic and acidic residues.

It belongs to the UPF0291 family.

It is found in the cytoplasm. This Halalkalibacterium halodurans (strain ATCC BAA-125 / DSM 18197 / FERM 7344 / JCM 9153 / C-125) (Bacillus halodurans) protein is UPF0291 protein BH2353.